The following is a 227-amino-acid chain: ATP synthase F(0) complex subunit a (227 aa).

A run of 6 helical transmembrane segments spans residues 14–34 (LFGI…FPAP), 69–89 (WGPY…LGLL), 98–118 (QLSV…IIGL), 132–152 (EGTP…SLFI), 180–200 (FVLL…LFLL), and 202–222 (LLEV…LSLY).

This sequence belongs to the ATPase A chain family. Component of the ATP synthase complex composed at least of ATP5F1A/subunit alpha, ATP5F1B/subunit beta, ATP5MC1/subunit c (homooctomer), MT-ATP6/subunit a, MT-ATP8/subunit 8, ATP5ME/subunit e, ATP5MF/subunit f, ATP5MG/subunit g, ATP5MK/subunit k, ATP5MJ/subunit j, ATP5F1C/subunit gamma, ATP5F1D/subunit delta, ATP5F1E/subunit epsilon, ATP5PF/subunit F6, ATP5PB/subunit b, ATP5PD/subunit d, ATP5PO/subunit OSCP. ATP synthase complex consists of a soluble F(1) head domain (subunits alpha(3) and beta(3)) - the catalytic core - and a membrane F(0) domain - the membrane proton channel (subunits c, a, 8, e, f, g, k and j). These two domains are linked by a central stalk (subunits gamma, delta, and epsilon) rotating inside the F1 region and a stationary peripheral stalk (subunits F6, b, d, and OSCP). Interacts with DNAJC30; interaction is direct.

The protein localises to the mitochondrion inner membrane. The enzyme catalyses H(+)(in) = H(+)(out). Its function is as follows. Subunit a, of the mitochondrial membrane ATP synthase complex (F(1)F(0) ATP synthase or Complex V) that produces ATP from ADP in the presence of a proton gradient across the membrane which is generated by electron transport complexes of the respiratory chain. ATP synthase complex consist of a soluble F(1) head domain - the catalytic core - and a membrane F(1) domain - the membrane proton channel. These two domains are linked by a central stalk rotating inside the F(1) region and a stationary peripheral stalk. During catalysis, ATP synthesis in the catalytic domain of F(1) is coupled via a rotary mechanism of the central stalk subunits to proton translocation. With the subunit c (ATP5MC1), forms the proton-conducting channel in the F(0) domain, that contains two crucial half-channels (inlet and outlet) that facilitate proton movement from the mitochondrial intermembrane space (IMS) into the matrix. Protons are taken up via the inlet half-channel and released through the outlet half-channel, following a Grotthuss mechanism. The chain is ATP synthase F(0) complex subunit a from Tetraodon nigroviridis (Spotted green pufferfish).